The sequence spans 94 residues: Phosphoribosyl-ATP pyrophosphatase (94 aa).

Belongs to the PRA-PH family.

It localises to the cytoplasm. It catalyses the reaction 1-(5-phospho-beta-D-ribosyl)-ATP + H2O = 1-(5-phospho-beta-D-ribosyl)-5'-AMP + diphosphate + H(+). It functions in the pathway amino-acid biosynthesis; L-histidine biosynthesis; L-histidine from 5-phospho-alpha-D-ribose 1-diphosphate: step 2/9. The chain is Phosphoribosyl-ATP pyrophosphatase from Pyrobaculum arsenaticum (strain DSM 13514 / JCM 11321 / PZ6).